A 618-amino-acid chain; its full sequence is Carbamoyl phosphate synthase large chain, C-terminal section (618 aa).

An oligomerization domain region spans residues M1–E78. The tract at residues S79–E477 is carbamoyl phosphate synthetic domain. An ATP-grasp domain is found at S208 to L399. ATP is bound by residues R244, K283, L285, E290, G315, V316, H317, S318, Q358, and E370. Residues Q358, E370, and N372 each contribute to the Mg(2+) site. Q358, E370, and N372 together coordinate Mn(2+). One can recognise an MGS-like domain in the interval M476 to F618. The segment at L478–F618 is allosteric domain.

This sequence belongs to the CarB family. As to quaternary structure, composed of two chains; the small (or glutamine) chain promotes the hydrolysis of glutamine to ammonia, which is used by the large (or ammonia) chain to synthesize carbamoyl phosphate. Tetramer of heterodimers (alpha,beta)4. Requires Mg(2+) as cofactor. Mn(2+) is required as a cofactor.

The enzyme catalyses hydrogencarbonate + L-glutamine + 2 ATP + H2O = carbamoyl phosphate + L-glutamate + 2 ADP + phosphate + 2 H(+). The catalysed reaction is hydrogencarbonate + NH4(+) + 2 ATP = carbamoyl phosphate + 2 ADP + phosphate + 2 H(+). It participates in amino-acid biosynthesis; L-arginine biosynthesis; carbamoyl phosphate from bicarbonate: step 1/1. Its pathway is pyrimidine metabolism; UMP biosynthesis via de novo pathway; (S)-dihydroorotate from bicarbonate: step 1/3. Large subunit of the glutamine-dependent carbamoyl phosphate synthetase (CPSase). CPSase catalyzes the formation of carbamoyl phosphate from the ammonia moiety of glutamine, carbonate, and phosphate donated by ATP, constituting the first step of 2 biosynthetic pathways, one leading to arginine and/or urea and the other to pyrimidine nucleotides. The large subunit (synthetase) binds the substrates ammonia (free or transferred from glutamine from the small subunit), hydrogencarbonate and ATP and carries out an ATP-coupled ligase reaction, activating hydrogencarbonate by forming carboxy phosphate which reacts with ammonia to form carbamoyl phosphate. This Methanocaldococcus jannaschii (strain ATCC 43067 / DSM 2661 / JAL-1 / JCM 10045 / NBRC 100440) (Methanococcus jannaschii) protein is Carbamoyl phosphate synthase large chain, C-terminal section (carB2).